The sequence spans 383 residues: Adaptive-response sensory kinase SasA (383 aa).

The region spanning 152–365 is the Histidine kinase domain; the sequence is MVAHELRTPL…CFTFTVPIWQ (214 aa). Phosphohistidine; by autocatalysis is present on H155.

As to quaternary structure, homooligomerizes. Interacts with KaiC. Participates in the KaiABC clock complex, whose core is composed of a KaiC homohexamer, 6 KaiB and up to 6 KaiA dimers. SasA and KaiB(fs) compete to bind to KaiC.

The enzyme catalyses ATP + protein L-histidine = ADP + protein N-phospho-L-histidine.. Member of the two-component regulatory system SasA/RpaA involved in genome-wide circadian gene expression. One of several clock output pathways. Participates in the Kai clock protein complex, the main circadian regulator in cyanobacteria, via its interaction with KaiC. KaiC enhances the autophosphorylation activity of SasA, which then transfers its phosphate group to RpaA to activate it. In addition to its output function, recruits fold-shifted KaiB (KaiB(fs)) to KaiC to cooperatively form the KaiB(6):KaiC(6) complex (independent of SasA kinase activity). Required for robustness of the circadian rhythm of gene expression and is involved in clock output, also required for adaptation to light/dark cycles. The sequence is that of Adaptive-response sensory kinase SasA from Parasynechococcus marenigrum (strain WH8102).